We begin with the raw amino-acid sequence, 277 residues long: UPF0496 protein At3g48650 (277 aa).

2 consecutive transmembrane segments (helical) span residues 124-144 (YIFF…LGAV) and 145-165 (SLVV…APLW).

This sequence belongs to the UPF0496 family.

The protein resides in the membrane. This is UPF0496 protein At3g48650 from Arabidopsis thaliana (Mouse-ear cress).